A 331-amino-acid polypeptide reads, in one-letter code: Probable zinc-binding oxidoreductase, mitochondrial (331 aa).

The segment covering 1–29 (MASVTSVPKTGRSVNQDVPATTLTLQTRP) has biased composition (polar residues). The tract at residues 1-34 (MASVTSVPKTGRSVNQDVPATTLTLQTRPTPAPN) is disordered.

It belongs to the zinc-containing alcohol dehydrogenase family. Quinone oxidoreductase subfamily.

Its subcellular location is the mitochondrion. This chain is Probable zinc-binding oxidoreductase, mitochondrial, found in Arthroderma benhamiae (strain ATCC MYA-4681 / CBS 112371) (Trichophyton mentagrophytes).